Reading from the N-terminus, the 143-residue chain is Transcriptional regulator MraZ (143 aa).

SpoVT-AbrB domains lie at 5–47 and 76–119; these read TYTP…PKEE and ADEQ…DAQA.

The protein belongs to the MraZ family. As to quaternary structure, forms oligomers.

The protein localises to the cytoplasm. It is found in the nucleoid. This is Transcriptional regulator MraZ from Corynebacterium glutamicum (strain R).